A 254-amino-acid chain; its full sequence is Diphthine synthase (254 aa).

Residues leucine 11, aspartate 86, isoleucine 89, 114–115 (SV), leucine 166, leucine 207, and histidine 232 each bind S-adenosyl-L-methionine.

Belongs to the diphthine synthase family. Homodimer.

It catalyses the reaction 2-[(3S)-amino-3-carboxypropyl]-L-histidyl-[translation elongation factor 2] + 3 S-adenosyl-L-methionine = diphthine-[translation elongation factor 2] + 3 S-adenosyl-L-homocysteine + 3 H(+). It functions in the pathway protein modification; peptidyl-diphthamide biosynthesis. Its function is as follows. S-adenosyl-L-methionine-dependent methyltransferase that catalyzes the trimethylation of the amino group of the modified target histidine residue in translation elongation factor 2 (EF-2), to form an intermediate called diphthine. The three successive methylation reactions represent the second step of diphthamide biosynthesis. This chain is Diphthine synthase, found in Sulfurisphaera tokodaii (strain DSM 16993 / JCM 10545 / NBRC 100140 / 7) (Sulfolobus tokodaii).